Consider the following 147-residue polypeptide: MSKPVYVLGGPNLNLLGTREPEIYGRDTLEDIHARLRALAGDVAIVARQTNSEGELVSWVQEAARDGRALILNAAAYTHTSIALHDALKTLKIPLIEVHLSNPAAREAFRHVNYVAPVAVGTIAGLGAYGYELALSAALRLSGEARS.

Tyr-24 functions as the Proton acceptor in the catalytic mechanism. Substrate contacts are provided by Asn-73, His-79, and Asp-86. His-99 (proton donor) is an active-site residue. Residues 100-101 and Arg-110 contribute to the substrate site; that span reads LS.

This sequence belongs to the type-II 3-dehydroquinase family. In terms of assembly, homododecamer.

The enzyme catalyses 3-dehydroquinate = 3-dehydroshikimate + H2O. It functions in the pathway metabolic intermediate biosynthesis; chorismate biosynthesis; chorismate from D-erythrose 4-phosphate and phosphoenolpyruvate: step 3/7. Functionally, catalyzes a trans-dehydration via an enolate intermediate. In Hyphomonas neptunium (strain ATCC 15444), this protein is 3-dehydroquinate dehydratase.